The following is a 744-amino-acid chain: Serine/threonine-protein kinase GM11705 (744 aa).

The segment covering 17–35 (VLSSHQPSPSATHPQSVPS) has biased composition (polar residues). Disordered stretches follow at residues 17–38 (VLSS…SKAN) and 54–78 (NVQE…PEKE). Doublecortin domains are found at residues 154-240 (LRIK…VEYN) and 309-392 (RIVT…AEDF). The Protein kinase domain occupies 473–731 (YTLGRIIGDG…SEDILDHPWT (259 aa)). Residues 479 to 487 (IGDGNFAIV) and lysine 502 each bind ATP. The Proton acceptor role is filled by aspartate 594.

The protein belongs to the protein kinase superfamily. CAMK Ser/Thr protein kinase family. CaMK subfamily.

The catalysed reaction is L-seryl-[protein] + ATP = O-phospho-L-seryl-[protein] + ADP + H(+). It carries out the reaction L-threonyl-[protein] + ATP = O-phospho-L-threonyl-[protein] + ADP + H(+). The protein is Serine/threonine-protein kinase GM11705 of Drosophila sechellia (Fruit fly).